The sequence spans 70 residues: Small ribosomal subunit protein bS21C (70 aa).

Residues 38–70 (YEKPTTERKRKKAAAVARLRKQVRRSMPPKKKY) are disordered. Basic residues predominate over residues 45–70 (RKRKKAAAVARLRKQVRRSMPPKKKY).

The protein belongs to the bacterial ribosomal protein bS21 family.

This is Small ribosomal subunit protein bS21C from Burkholderia thailandensis (strain ATCC 700388 / DSM 13276 / CCUG 48851 / CIP 106301 / E264).